We begin with the raw amino-acid sequence, 511 residues long: N-acetylgalactosamine-6-O-sulfatase (511 aa).

Position 83 is a 3-oxoalanine (Ser) (S83).

Belongs to the sulfatase family. The conversion to 3-oxoalanine (also known as C-formylglycine, FGly), of a serine or cysteine residue in prokaryotes and of a cysteine residue in eukaryotes, is critical for catalytic activity.

Functionally, exosulfatase involved in the degradation of the glycosaminoglycans (GAGs) chondroitin sulfate (CS) and dermatan sulfate (DS). Catalyzes the hydrolysis of the 6-sulfate groups of the N-acetyl-D-galactosamine 6-sulfate units. GAG-specific sulfatases play a key role in the persistence of the major human gut symbiont B.thetaiotaomicron in the host gastrointestinal tract. In Bacteroides thetaiotaomicron (strain ATCC 29148 / DSM 2079 / JCM 5827 / CCUG 10774 / NCTC 10582 / VPI-5482 / E50), this protein is N-acetylgalactosamine-6-O-sulfatase.